The primary structure comprises 121 residues: Movement protein TGBp3 (121 aa).

Residues 1–40 (MHYPTEADTSTGPNPSATSAPVRPRHVTPSLSPSSSSSPS) form a disordered region. At 1-43 (MHYPTEADTSTGPNPSATSAPVRPRHVTPSLSPSSSSSPSPDS) the chain is on the lumenal side. The segment covering 7–19 (ADTSTGPNPSATS) has biased composition (polar residues). A compositionally biased stretch (low complexity) spans 29–40 (PSLSPSSSSSPS). A helical membrane pass occupies residues 44–64 (FYYFLAAAVILTAALAAALLT). Over 65-121 (PNPGCTIVITGHTTIIQGSCPIPPQLVLAAHPRGLSLEQYLKFTNTLPDGSQHRSHR) the chain is Cytoplasmic.

It belongs to the Tymovirales TGBp3 protein family.

It localises to the host endoplasmic reticulum membrane. Plays a role in viral cell-to-cell propagation, by facilitating genome transport to neighboring plant cells through plasmosdesmata. May induce the formation of granular vesicles derived from the Endoplasmic reticulum, which align on actin filaments. The polypeptide is Movement protein TGBp3 (Plantago asiatica (P1AMV)).